The following is a 341-amino-acid chain: Phosphate acyltransferase (341 aa).

This sequence belongs to the PlsX family. Homodimer. Probably interacts with PlsY.

Its subcellular location is the cytoplasm. The enzyme catalyses a fatty acyl-[ACP] + phosphate = an acyl phosphate + holo-[ACP]. It functions in the pathway lipid metabolism; phospholipid metabolism. In terms of biological role, catalyzes the reversible formation of acyl-phosphate (acyl-PO(4)) from acyl-[acyl-carrier-protein] (acyl-ACP). This enzyme utilizes acyl-ACP as fatty acyl donor, but not acyl-CoA. The chain is Phosphate acyltransferase from Vibrio vulnificus (strain CMCP6).